A 423-amino-acid polypeptide reads, in one-letter code: Serine--tRNA ligase (423 aa).

Basic and acidic residues-rich tracts occupy residues 1 to 24 and 62 to 71; these read MIDLKQLRDDPDRVRESQRTRGED and KMRDASPEEK. The tract at residues 1–71 is disordered; sequence MIDLKQLRDD…KMRDASPEEK (71 aa). 230–232 contributes to the L-serine binding site; sequence TSE. Residues 261–263 and V277 contribute to the ATP site; that span reads RRE. E284 serves as a coordination point for L-serine. Residue 348 to 351 participates in ATP binding; it reads ELTS. T383 serves as a coordination point for L-serine.

This sequence belongs to the class-II aminoacyl-tRNA synthetase family. Type-1 seryl-tRNA synthetase subfamily. As to quaternary structure, homodimer. The tRNA molecule binds across the dimer.

Its subcellular location is the cytoplasm. It catalyses the reaction tRNA(Ser) + L-serine + ATP = L-seryl-tRNA(Ser) + AMP + diphosphate + H(+). The enzyme catalyses tRNA(Sec) + L-serine + ATP = L-seryl-tRNA(Sec) + AMP + diphosphate + H(+). It participates in aminoacyl-tRNA biosynthesis; selenocysteinyl-tRNA(Sec) biosynthesis; L-seryl-tRNA(Sec) from L-serine and tRNA(Sec): step 1/1. Catalyzes the attachment of serine to tRNA(Ser). Is also able to aminoacylate tRNA(Sec) with serine, to form the misacylated tRNA L-seryl-tRNA(Sec), which will be further converted into selenocysteinyl-tRNA(Sec). The chain is Serine--tRNA ligase from Corynebacterium kroppenstedtii (strain DSM 44385 / JCM 11950 / CIP 105744 / CCUG 35717).